The chain runs to 668 residues: tRNA 5-methylaminomethyl-2-thiouridine biosynthesis bifunctional protein MnmC (668 aa).

The segment at 1-245 (MKHYSIQPAN…KREMLCGVME (245 aa)) is tRNA (mnm(5)s(2)U34)-methyltransferase. The segment at 270 to 668 (IGGGIASALL…LLKGKAVKAG (399 aa)) is FAD-dependent cmnm(5)s(2)U34 oxidoreductase.

This sequence in the N-terminal section; belongs to the methyltransferase superfamily. tRNA (mnm(5)s(2)U34)-methyltransferase family. The protein in the C-terminal section; belongs to the DAO family. FAD is required as a cofactor.

Its subcellular location is the cytoplasm. The catalysed reaction is 5-aminomethyl-2-thiouridine(34) in tRNA + S-adenosyl-L-methionine = 5-methylaminomethyl-2-thiouridine(34) in tRNA + S-adenosyl-L-homocysteine + H(+). Catalyzes the last two steps in the biosynthesis of 5-methylaminomethyl-2-thiouridine (mnm(5)s(2)U) at the wobble position (U34) in tRNA. Catalyzes the FAD-dependent demodification of cmnm(5)s(2)U34 to nm(5)s(2)U34, followed by the transfer of a methyl group from S-adenosyl-L-methionine to nm(5)s(2)U34, to form mnm(5)s(2)U34. The polypeptide is tRNA 5-methylaminomethyl-2-thiouridine biosynthesis bifunctional protein MnmC (Escherichia coli O157:H7).